The chain runs to 458 residues: UDP-glycosyltransferase 76G1 (458 aa).

Catalysis depends on H25, which acts as the Proton acceptor. H25 is a rebaudioside A binding site. H25 contributes to the rubusoside binding site. N27 contacts UDP. D124 (charge relay) is an active-site residue. Residues 146–147 and H155 contribute to the rebaudioside A site; that span reads TS. UDP-binding positions include S283, 338-339, and 356-364; these read WV and HSGWNSTLE. Residues W359 and 380 to 381 each bind rebaudioside A; that span reads DQ.

This sequence belongs to the UDP-glycosyltransferase family. Monomer.

The enzyme catalyses steviolbioside + UDP-alpha-D-glucose = rebaudioside B + UDP + H(+). It carries out the reaction stevioside + UDP-alpha-D-glucose = rebaudioside A + UDP + H(+). The catalysed reaction is rebaudioside E + UDP-alpha-D-glucose = rebaudioside D + UDP + H(+). It catalyses the reaction rebaudioside D + UDP-alpha-D-glucose = rebaudioside M + UDP + H(+). Functionally, involved in the biosynthesis of steviol glycosides in leaves. Converts the di-glycoside steviolbioside to the tri-glycoside rebaudioside B. Converts the tri-glycoside stevioside to the tetra-glycoside rebaudioside A. Converts the tetra-glycoside rebaudioside E to the penta-glycoside rebaudioside D. Converts the penta-glycoside rebaudioside D to the hexa-glycoside rebaudioside M. Can glucosylate rubusoside and rebaudioside A in vitro. This is UDP-glycosyltransferase 76G1 from Stevia rebaudiana (Stevia).